The primary structure comprises 129 residues: Small ribosomal subunit protein bS6 (129 aa).

The protein belongs to the bacterial ribosomal protein bS6 family.

Binds together with bS18 to 16S ribosomal RNA. This is Small ribosomal subunit protein bS6 from Microcystis aeruginosa (strain NIES-843 / IAM M-2473).